An 845-amino-acid polypeptide reads, in one-letter code: ABC transporter A family member 9 (845 aa).

The next 7 membrane-spanning stretches (helical) occupy residues 33 to 53, 192 to 212, 235 to 255, 292 to 312, 318 to 338, 347 to 367, and 417 to 437; these read CVQI…NFWV, AFVA…FLGG, IASL…MPLF, IYFI…FAVF, FAMF…SFFL, AASI…SILS, and SKII…ALYL. One can recognise an ABC transporter domain in the interval 531–762; the sequence is VIIEGLTKHY…FGDGYSVRIN (232 aa). ATP is bound at residue 565–572; sequence GANGAGKT.

The protein belongs to the ABC transporter superfamily. ABCA family.

It localises to the membrane. The protein is ABC transporter A family member 9 (abcA9) of Dictyostelium discoideum (Social amoeba).